The following is a 499-amino-acid chain: GTPase Der (499 aa).

EngA-type G domains are found at residues 3–166 (PVVA…LETL) and 213–386 (IKFA…QSAT). GTP-binding positions include 9-16 (GRPNVGKS), 56-60 (DTGGI), 118-121 (NKTD), 219-226 (GRPNVGKS), 266-270 (DTAGV), and 331-334 (NKWD). The KH-like domain maps to 387–471 (RRTSTAMLTR…PIRVEFQESA (85 aa)). Positions 476-499 (GRKNTMTLSQERQRKRLLKAKTKK) are disordered. The segment covering 488–499 (QRKRLLKAKTKK) has biased composition (basic residues).

This sequence belongs to the TRAFAC class TrmE-Era-EngA-EngB-Septin-like GTPase superfamily. EngA (Der) GTPase family. As to quaternary structure, associates with the 50S ribosomal subunit.

GTPase that plays an essential role in the late steps of ribosome biogenesis. In Aeromonas salmonicida (strain A449), this protein is GTPase Der.